Here is a 567-residue protein sequence, read N- to C-terminus: Diphtheria toxin (567 aa).

The signal sequence occupies residues Met-1–Ala-32. His-53 and Tyr-97 together coordinate NAD(+). Glu-180 is a catalytic residue. Cystine bridges form between Cys-218–Cys-233 and Cys-493–Cys-503.

Homodimer. Proteolytic activation by host furin cleaves the protein in two parts, Diphtheria toxin fragment A and Diphtheria toxin fragment B; which remain associated via a disulfide bond.

The enzyme catalyses diphthamide-[translation elongation factor 2] + NAD(+) = N-(ADP-D-ribosyl)diphthamide-[translation elongation factor 2] + nicotinamide + H(+). With respect to regulation, partially inhibited by 1,8-naphthalimide (NAP). Functionally, diphtheria toxin, produced by a phage infecting Corynebacterium diphtheriae, is a proenzyme that, after activation, catalyzes the covalent attachment of the ADP ribose moiety of NAD to eukaryotic elongation factor 2 (eEF-2). Fragment A is the catalytic portion responsible for enzymatic ADP-ribosylation of elongation factor 2, while fragment B is responsible for binding of toxin to cell receptors and entry of fragment A. This Corynebacterium diphtheriae protein is Diphtheria toxin.